The primary structure comprises 1329 residues: Putative protein tag-53 (1329 aa).

Positions 65–92 (SCDKPCYNGVCLNKACVCSKGWYGSQCD) constitute an EGF-like 1 domain. Disulfide bonds link Cys66–Cys75, Cys70–Cys80, Cys82–Cys91, Cys94–Cys120, and Cys144–Cys166. The CUB domain maps to 94–203 (CFGRIRISDN…NGFNVSYESN (110 aa)). N-linked (GlcNAc...) asparagine glycosylation is present at Asn103. N-linked (GlcNAc...) asparagine glycosylation is found at Asn197 and Asn208. 2 consecutive EGF-like domains span residues 204 to 232 (RCAY…LNCE) and 235 to 270 (VCQL…ETCQ). Intrachain disulfides connect Cys205–Cys215, Cys209–Cys220, Cys222–Cys231, Cys236–Cys252, Cys247–Cys257, and Cys259–Cys269. 6 Kelch repeats span residues 302–353 (VVWS…KYKN), 355–408 (LYMF…VAGH), 416–463 (EMFV…AVEY), 471–518 (AILV…YLNG), 520–575 (MVVV…VIGQ), and 577–619 (LYAL…KCVF). N-linked (GlcNAc...) asparagine glycosylation is found at Asn324, Asn395, Asn447, Asn481, Asn529, and Asn555. N-linked (GlcNAc...) asparagine glycosylation is present at Asn820. Residue Asn832 is glycosylated (N-linked (GlcNAc...) asparagine; atypical). 2 N-linked (GlcNAc...) asparagine glycosylation sites follow: Asn833 and Asn934. Disulfide bonds link Cys945–Cys953, Cys947–Cys968, Cys971–Cys980, Cys983–Cys997, Cys1000–Cys1009, Cys1002–Cys1016, Cys1018–Cys1028, and Cys1031–Cys1045. 2 consecutive Laminin EGF-like domains span residues 945 to 999 (CQCN…VCSP) and 1000 to 1047 (CDCH…PCFY). The 47-residue stretch at 952–998 (TCFTSVGSFPPVTIEKCQSCQNHTTGAHCERCAPGFYGDARNGGVCS) folds into the EGF-like 4 domain. N-linked (GlcNAc...) asparagine glycosylation occurs at Asn973. N-linked (GlcNAc...) asparagine glycans are attached at residues Asn1066, Asn1102, and Asn1147. The chain crosses the membrane as a helical span at residues 1176–1196 (VLFFVIFAACFIVLLVVAGLL). Topologically, residues 1197-1329 (WMIKVRIEAY…TIRQRPNNND (133 aa)) are cytoplasmic.

The protein resides in the membrane. This chain is Putative protein tag-53 (tag-53), found in Caenorhabditis elegans.